The sequence spans 249 residues: Probable transcriptional regulatory protein aq_1575 (249 aa).

The protein belongs to the TACO1 family.

It localises to the cytoplasm. This is Probable transcriptional regulatory protein aq_1575 from Aquifex aeolicus (strain VF5).